Consider the following 186-residue polypeptide: Nicotinamide-nucleotide adenylyltransferase (186 aa).

The protein belongs to the archaeal NMN adenylyltransferase family.

It is found in the cytoplasm. It catalyses the reaction beta-nicotinamide D-ribonucleotide + ATP + H(+) = diphosphate + NAD(+). Its pathway is cofactor biosynthesis; NAD(+) biosynthesis; NAD(+) from nicotinamide D-ribonucleotide: step 1/1. In Thermococcus sibiricus (strain DSM 12597 / MM 739), this protein is Nicotinamide-nucleotide adenylyltransferase.